We begin with the raw amino-acid sequence, 419 residues long: MDKFRVQGPTKLQGEVTISGAKNAALPILFAALLAEEPVEIQNVPKLKDVDTSMKLLSQLGAKVERNGSVHIDARDVNVFCAPYDLVKTMRASIWALGPLVARFGQGQVSLPGGCTIGARPVDLHISGLEQLGATIKLEEGYVKASVDGRLKGAHIVMDKVSVGATVTIMCAATLAEGTTIIENAAREPEIVDTANFLITLGAKISGQGTDRIVIEGVERLGGGVYRVLPDRIETGTFLVAAAISRGKIICRNAQPDTLDAVLAKLRDAGADIEVGEDWISLDMHGKRPKAVNVRTAPHPAFPTDMQAQFTLLNLVAEGTGFITETVFENRFMHVPELSRMGAHAEIESNTVICHGVEKLSGAQVMATDLRASASLVLAGCIAEGTTVVDRIYHIDRGYERIEDKLRALGANIERVKGE.

22–23 (KN) contributes to the phosphoenolpyruvate binding site. Arg-91 provides a ligand contact to UDP-N-acetyl-alpha-D-glucosamine. Cys-115 functions as the Proton donor in the catalytic mechanism. Cys-115 carries the 2-(S-cysteinyl)pyruvic acid O-phosphothioketal modification. UDP-N-acetyl-alpha-D-glucosamine-binding positions include 120 to 124 (RPVDL), 160 to 163 (KVSV), Asp-305, and Val-327.

The protein belongs to the EPSP synthase family. MurA subfamily.

The protein resides in the cytoplasm. The enzyme catalyses phosphoenolpyruvate + UDP-N-acetyl-alpha-D-glucosamine = UDP-N-acetyl-3-O-(1-carboxyvinyl)-alpha-D-glucosamine + phosphate. It participates in cell wall biogenesis; peptidoglycan biosynthesis. Its function is as follows. Cell wall formation. Adds enolpyruvyl to UDP-N-acetylglucosamine. The polypeptide is UDP-N-acetylglucosamine 1-carboxyvinyltransferase (Shigella sonnei (strain Ss046)).